The following is a 352-amino-acid chain: Isopentenyl-diphosphate delta-isomerase (352 aa).

6-7 (RK) provides a ligand contact to substrate. FMN contacts are provided by residues 63-65 (AMT), Ser-93, and Asn-122. 93–95 (SQR) is a substrate binding site. Gln-160 is a binding site for substrate. Glu-161 contributes to the Mg(2+) binding site. Residues Lys-192, Thr-221, 271-273 (GIR), and 292-293 (SQ) each bind FMN.

Belongs to the IPP isomerase type 2 family. In terms of assembly, homooctamer. Dimer of tetramers. FMN is required as a cofactor. NADPH serves as cofactor. Requires Mg(2+) as cofactor.

It localises to the cytoplasm. It carries out the reaction isopentenyl diphosphate = dimethylallyl diphosphate. Its function is as follows. Involved in the biosynthesis of isoprenoids. Catalyzes the 1,3-allylic rearrangement of the homoallylic substrate isopentenyl (IPP) to its allylic isomer, dimethylallyl diphosphate (DMAPP). This is Isopentenyl-diphosphate delta-isomerase from Pyrobaculum aerophilum (strain ATCC 51768 / DSM 7523 / JCM 9630 / CIP 104966 / NBRC 100827 / IM2).